We begin with the raw amino-acid sequence, 333 residues long: UPF0284 protein VNG_1572C (333 aa).

Belongs to the UPF0284 family.

The polypeptide is UPF0284 protein VNG_1572C (Halobacterium salinarum (strain ATCC 700922 / JCM 11081 / NRC-1) (Halobacterium halobium)).